A 507-amino-acid chain; its full sequence is Dolichyl pyrophosphate Man9GlcNAc2 alpha-1,3-glucosyltransferase (507 aa).

Topologically, residues 1 to 2 are cytoplasmic; it reads ME. A helical membrane pass occupies residues 3 to 23; the sequence is SWTWMTVVVLLGLTVRWTVSL. Topologically, residues 24-114 are lumenal; that stretch reads NSYSGAGKPP…SQAHKLFMRT (91 aa). A glycan (N-linked (GlcNAc...) asparagine) is linked at asparagine 59. The helical transmembrane segment at 115 to 135 threads the bilayer; the sequence is TVLAADLLIYIPAVLLYCYSL. Topologically, residues 136–143 are cytoplasmic; the sequence is KEISPKRK. The chain crosses the membrane as a helical span at residues 144–164; the sequence is IASALCILLYPGLILIDYGHF. Over 165–172 the chain is Lumenal; that stretch reads QYNSVSLG. Residues 173–193 form a helical membrane-spanning segment; that stretch reads FALWGVLGVSCDWDLLGSLAF. At 194–229 the chain is on the cytoplasmic side; the sequence is CLALNYKQMELYHSLPFFCFLLGKCFKKGLRGKGSA. A helical transmembrane segment spans residues 230–250; that stretch reads LFIRIACTVVASFLLCWLPFL. The Lumenal portion of the chain corresponds to 251 to 297; it reads TEREHALQVVRRLFPVDRGLFEDKVANIWCSLNVFLKIKDILPRHIQ. The helical transmembrane segment at 298 to 318 threads the bilayer; the sequence is IAISFCFTFLSLLPACIKLTV. Residues 319–332 lie on the Cytoplasmic side of the membrane; the sequence is QPSAKGFRFTLVSC. The helical transmembrane segment at 333–353 threads the bilayer; it reads ALSFFLFSFQVHEKSILLVSL. At 354–361 the chain is on the lumenal side; that stretch reads PVCLVLTE. A helical transmembrane segment spans residues 362–382; the sequence is IPFMSTWFLLVSTFSMLPLLL. At 383–385 the chain is on the cytoplasmic side; sequence KDQ. The helical transmembrane segment at 386 to 406 threads the bilayer; that stretch reads LLLPSVVTVMAFLIACSTFFP. The Lumenal portion of the chain corresponds to 407 to 437; the sequence is MFENTSEEQLQLKSFAVSVRRHLPGFTFLPR. A helical transmembrane segment spans residues 438 to 458; it reads IIQCLFLSSVITMILLTILSV. Over 459-468 the chain is Cytoplasmic; it reads TLDPPQKLPD. The helical transmembrane segment at 469–489 threads the bilayer; that stretch reads LFSVLICFVSCVNFVFFLVYF. The Lumenal portion of the chain corresponds to 490 to 507; the sequence is NIVIMWDSKNGRNRKKID.

The protein belongs to the ALG6/ALG8 glucosyltransferase family.

It localises to the endoplasmic reticulum membrane. It carries out the reaction an alpha-D-Man-(1-&gt;2)-alpha-D-Man-(1-&gt;2)-alpha-D-Man-(1-&gt;3)-[alpha-D-Man-(1-&gt;2)-alpha-D-Man-(1-&gt;3)-[alpha-D-Man-(1-&gt;2)-alpha-D-Man-(1-&gt;6)]-alpha-D-Man-(1-&gt;6)]-beta-D-Man-(1-&gt;4)-beta-D-GlcNAc-(1-&gt;4)-alpha-D-GlcNAc-diphospho-di-trans,poly-cis-dolichol + a di-trans,poly-cis-dolichyl beta-D-glucosyl phosphate = an alpha-D-Glc-(1-&gt;3)-alpha-D-Man-(1-&gt;2)-alpha-D-Man-(1-&gt;2)-alpha-D-Man-(1-&gt;3)-[alpha-D-Man-(1-&gt;2)-alpha-D-Man-(1-&gt;3)-[alpha-D-Man-(1-&gt;2)-alpha-D-Man-(1-&gt;6)]-alpha-D-Man-(1-&gt;6)]-beta-D-Man-(1-&gt;4)-beta-D-GlcNAc-(1-&gt;4)-alpha-D-GlcNAc-diphospho-di-trans,poly-cis-dolichol + a di-trans,poly-cis-dolichyl phosphate + H(+). Its pathway is protein modification; protein glycosylation. In terms of biological role, dolichyl pyrophosphate Man9GlcNAc2 alpha-1,3-glucosyltransferase that operates in the biosynthetic pathway of dolichol-linked oligosaccharides, the glycan precursors employed in protein asparagine (N)-glycosylation. The assembly of dolichol-linked oligosaccharides begins on the cytosolic side of the endoplasmic reticulum membrane and finishes in its lumen. The sequential addition of sugars to dolichol pyrophosphate produces dolichol-linked oligosaccharides containing fourteen sugars, including two GlcNAcs, nine mannoses and three glucoses. Once assembled, the oligosaccharide is transferred from the lipid to nascent proteins by oligosaccharyltransferases. In the lumen of the endoplasmic reticulum, adds the first glucose residue from dolichyl phosphate glucose (Dol-P-Glc) onto the lipid-linked oligosaccharide intermediate Man(9)GlcNAc(2)-PP-Dol to produce Glc(1)Man(9)GlcNAc(2)-PP-Dol. Glc(1)Man(9)GlcNAc(2)-PP-Dol is a substrate for ALG8, the following enzyme in the biosynthetic pathway. In Rattus norvegicus (Rat), this protein is Dolichyl pyrophosphate Man9GlcNAc2 alpha-1,3-glucosyltransferase.